The primary structure comprises 374 residues: Alcohol dehydrogenase S chain (374 aa).

The residue at position 2 (S2) is an N-acetylserine. C47, H68, C98, C101, C104, C112, and C174 together coordinate Zn(2+). Residues 199–204 (GLGGVG), D223, K228, 292–294 (VGV), and R369 contribute to the NAD(+) site.

The protein belongs to the zinc-containing alcohol dehydrogenase family. Class-I subfamily. As to quaternary structure, dimer of identical or non-identical chains of two types (E and S) coded by 2 separate genes at different loci. It depends on Zn(2+) as a cofactor.

The protein resides in the cytoplasm. The catalysed reaction is a primary alcohol + NAD(+) = an aldehyde + NADH + H(+). It catalyses the reaction a secondary alcohol + NAD(+) = a ketone + NADH + H(+). The polypeptide is Alcohol dehydrogenase S chain (Equus caballus (Horse)).